The following is a 106-amino-acid chain: Large ribosomal subunit protein eL42 (106 aa).

Residues 36–56 (FAQGKRRYDRKQSGYGGQTKP) are disordered.

It belongs to the eukaryotic ribosomal protein eL42 family.

This is Large ribosomal subunit protein eL42 (RPL44) from Phaffia rhodozyma (Yeast).